The following is a 638-amino-acid chain: Growth hormone receptor (638 aa).

Positions 1 to 18 (MDLWRVFLTLALAVSSDM) are cleaved as a signal peptide. The Extracellular portion of the chain corresponds to 19–265 (FPGSGATPAT…TLAACEEDFR (247 aa)). Cystine bridges form between cysteine 56/cysteine 66 and cysteine 101/cysteine 112. Asparagine 115 carries an N-linked (GlcNAc...) asparagine glycan. A disulfide bond links cysteine 126 and cysteine 140. One can recognise a Fibronectin type-III domain in the interval 151-254 (PPIGLNWTLL…EVLRVTFPQM (104 aa)). Residues asparagine 156, asparagine 161, and asparagine 200 are each glycosylated (N-linked (GlcNAc...) asparagine). The WSXWS motif motif lies at 240-244 (YSEFS). The chain crosses the membrane as a helical span at residues 266–289 (FPWFLIIIFGIFGVAVMLFVVIFS). The Cytoplasmic segment spans residues 290-638 (KQQRIKMLIL…STDQLNKIMQ (349 aa)). The tract at residues 295 to 380 (KMLILPPVPV…QEKSAGILGA (86 aa)) is required for JAK2 binding. Residues 298 to 306 (ILPPVPVPK) carry the Box 1 motif motif. The short motif at 341–350 (DSWVEFIELD) is the UbE motif element. Serine 342 bears the Phosphoserine mark. A disordered region spans residues 357–389 (KTEESDTDRLLSDDQEKSAGILGAKDDDSGRTS). Basic and acidic residues predominate over residues 363-373 (TDRLLSDDQEK). Residues tyrosine 487 and tyrosine 594 each carry the phosphotyrosine modification.

This sequence belongs to the type I cytokine receptor family. Type 1 subfamily. In terms of assembly, on growth hormone (GH) binding, forms homodimers and binds JAK2 via a box 1-containing domain. Post-translationally, the soluble form (GHBP) is produced by phorbol ester-promoted proteolytic cleavage at the cell surface (shedding) by ADAM17/TACE. Shedding is inhibited by growth hormone (GH) binding to the receptor probably due to a conformational change in GHR rendering the receptor inaccessible to ADAM17. In terms of processing, on GH binding, phosphorylated on tyrosine residues in the cytoplasmic domain by JAK2. Phosphorylation on either (or all of) Tyr-534, Tyr-566 and/or Tyr-627 is required for STAT5 activation. Phosphorylation on Tyr-333 would seem necessary for JAK2 activation. Ubiquitinated by the ECS(SOCS2) complex following ligand-binding and phosphorylation by JAK2, leading to its degradation by the proteasome. Regulation by the ECS(SOCS2) complex acts as a negative feedback loop of growth hormone receptor signaling. Ubiquitination is not sufficient for GHR internalization. In terms of tissue distribution, highest expression in liver. Also expressed in heart, kidney and muscle.

The protein resides in the cell membrane. It localises to the secreted. Its function is as follows. Receptor for pituitary gland growth hormone involved in regulating postnatal body growth. On ligand binding, couples to, and activates the JAK2/STAT5 pathway. In terms of biological role, receptor for pituitary gland growth hormone (GH1) involved in regulating postnatal body growth. On ligand binding, couples to the JAK2/STAT5 pathway. Functionally, the soluble form (GHBP) acts as a reservoir of growth hormone in plasma and may be a modulator/inhibitor of GH signaling. The sequence is that of Growth hormone receptor (Ghr) from Rattus norvegicus (Rat).